The primary structure comprises 214 residues: Probable GTP-binding protein EngB (214 aa).

The region spanning 31-214 is the EngB-type G domain; the sequence is GPPEIAFAGR…LRAAILQTIA (184 aa). GTP is bound by residues 39-46, 66-70, 93-96, 160-163, and 194-196; these read GRSNVGKS, GRTQE, DMPG, TKSD, and TSS. Ser-46 and Thr-68 together coordinate Mg(2+).

Belongs to the TRAFAC class TrmE-Era-EngA-EngB-Septin-like GTPase superfamily. EngB GTPase family. Requires Mg(2+) as cofactor.

Its function is as follows. Necessary for normal cell division and for the maintenance of normal septation. The chain is Probable GTP-binding protein EngB from Bartonella tribocorum (strain CIP 105476 / IBS 506).